The following is a 64-amino-acid chain: Large ribosomal subunit protein eL37 (64 aa).

Residues cysteine 20, cysteine 23, cysteine 35, and cysteine 38 each contribute to the Zn(2+) site. The C4-type zinc finger occupies cysteine 20–cysteine 38.

The protein belongs to the eukaryotic ribosomal protein eL37 family. Zn(2+) is required as a cofactor.

Functionally, binds to the 23S rRNA. In Methanococcus vannielii (strain ATCC 35089 / DSM 1224 / JCM 13029 / OCM 148 / SB), this protein is Large ribosomal subunit protein eL37.